We begin with the raw amino-acid sequence, 471 residues long: Cysteine--tRNA ligase (471 aa).

C29 is a binding site for Zn(2+). The 'HIGH' region motif lies at 31 to 41 (PTVYNYIHIGN). Residues C209, H234, and E238 each coordinate Zn(2+). A 'KMSKS' region motif is present at residues 266–270 (KMSKS). K269 contacts ATP.

Belongs to the class-I aminoacyl-tRNA synthetase family. Monomer. It depends on Zn(2+) as a cofactor.

The protein localises to the cytoplasm. It carries out the reaction tRNA(Cys) + L-cysteine + ATP = L-cysteinyl-tRNA(Cys) + AMP + diphosphate. The chain is Cysteine--tRNA ligase from Listeria monocytogenes serotype 4b (strain CLIP80459).